The sequence spans 284 residues: MASHDHDHDHHHHHSHDDGDHHHSHHQDGSHGGGGGSWVGEDGRVWHSHDGLAPHSHEPIYSPGDFSKRAPPLISRRFAERAFTVGIGGPVGTGKTALMLALCRSLREKYSLAAVTNDIFTKEDGEFLIKHGALPEERIRAVETGGCPHAAIREDISINLGPLEELSNLCKADLLLCESGGDNLAANFSRELADYIIYIIDVSGGDKIPRKGGPGITQADLLIINKTDLAPAVGADLAVMERDALRMREGGPFVFAQVKHGVGVEEIVNHILQAWEIATGNKRR.

The tract at residues 1–51 is disordered; sequence MASHDHDHDHHHHHSHDDGDHHHSHHQDGSHGGGGGSWVGEDGRVWHSHDG. Composition is skewed to basic and acidic residues over residues 15–29 and 41–51; these read SHDD…HQDG and EDGRVWHSHDG. 89 to 96 lines the GTP pocket; it reads GPVGTGKT.

Belongs to the SIMIBI class G3E GTPase family. UreG subfamily. In terms of assembly, URED, UREF and UREG may form a complex that acts as a GTP-hydrolysis-dependent molecular chaperone, activating the urease apoprotein.

In terms of biological role, required for the maturation and activation of urease via the functional incorporation of the urease nickel metallocenter. The sequence is that of Urease accessory protein G (UREG) from Oryza sativa subsp. japonica (Rice).